The sequence spans 111 residues: uncharacterized protein (111 aa).

The interval 1 to 85 is disordered; sequence MTGLMKAFQK…TSSREDEQKL (85 aa). Polar residues predominate over residues 11 to 23; the sequence is LSPTKRQYAEITQ. Over residues 24–42 the composition is skewed to low complexity; that stretch reads SNSSISSSSSGSKYNDSSS. Positions 56 to 77 are enriched in polar residues; sequence ARASTSTQAQKPASSQQKGGTS.

This is an uncharacterized protein from Microplitis demolitor (Parasitoid wasp).